The sequence spans 128 residues: Small ribosomal subunit protein uS13 (128 aa).

The segment at 85–128 (GSYRGLRHRRSLPVRGQRTHTNARTRKGPRRGTVANKKKATGKT) is disordered. Positions 89–128 (GLRHRRSLPVRGQRTHTNARTRKGPRRGTVANKKKATGKT) are enriched in basic residues.

Belongs to the universal ribosomal protein uS13 family. As to quaternary structure, part of the 30S ribosomal subunit. Forms a loose heterodimer with protein S19. Forms two bridges to the 50S subunit in the 70S ribosome.

Its function is as follows. Located at the top of the head of the 30S subunit, it contacts several helices of the 16S rRNA. In the 70S ribosome it contacts the 23S rRNA (bridge B1a) and protein L5 of the 50S subunit (bridge B1b), connecting the 2 subunits; these bridges are implicated in subunit movement. Contacts the tRNAs in the A and P-sites. This chain is Small ribosomal subunit protein uS13, found in Solibacter usitatus (strain Ellin6076).